Consider the following 1436-residue polypeptide: DNA-directed RNA polymerase subunit beta (1436 aa).

This sequence belongs to the RNA polymerase beta chain family. In terms of assembly, the RNAP catalytic core consists of 2 alpha, 1 beta, 1 beta' and 1 omega subunit. When a sigma factor is associated with the core the holoenzyme is formed, which can initiate transcription.

It carries out the reaction RNA(n) + a ribonucleoside 5'-triphosphate = RNA(n+1) + diphosphate. In terms of biological role, DNA-dependent RNA polymerase catalyzes the transcription of DNA into RNA using the four ribonucleoside triphosphates as substrates. In Wolbachia pipientis, this protein is DNA-directed RNA polymerase subunit beta.